The primary structure comprises 342 residues: Thymidylate synthase (342 aa).

Residues Arg31 and 156–157 contribute to the dUMP site; that span reads RR. Residue Cys176 is the Nucleophile of the active site. Residues 196-199, Asn207, and 237-239 each bind dUMP; these read RSGD and HVY. Asp199 serves as a coordination point for (6R)-5,10-methylene-5,6,7,8-tetrahydrofolate. (6R)-5,10-methylene-5,6,7,8-tetrahydrofolate is bound at residue Ala341.

The protein belongs to the thymidylate synthase family. Bacterial-type ThyA subfamily. As to quaternary structure, homodimer.

Its subcellular location is the cytoplasm. It catalyses the reaction dUMP + (6R)-5,10-methylene-5,6,7,8-tetrahydrofolate = 7,8-dihydrofolate + dTMP. It participates in pyrimidine metabolism; dTTP biosynthesis. Its function is as follows. Catalyzes the reductive methylation of 2'-deoxyuridine-5'-monophosphate (dUMP) to 2'-deoxythymidine-5'-monophosphate (dTMP) while utilizing 5,10-methylenetetrahydrofolate (mTHF) as the methyl donor and reductant in the reaction, yielding dihydrofolate (DHF) as a by-product. This enzymatic reaction provides an intracellular de novo source of dTMP, an essential precursor for DNA biosynthesis. The chain is Thymidylate synthase from Haloferax volcanii (Halobacterium volcanii).